A 152-amino-acid chain; its full sequence is Eukaryotic translation initiation factor 2 subunit 3 (152 aa).

The residue at position 1 (alanine 1) is an N-acetylalanine. 51–54 (NKID) provides a ligand contact to GTP.

It belongs to the TRAFAC class translation factor GTPase superfamily. Classic translation factor GTPase family. EIF2G subfamily. Eukaryotic translation initiation factor 2 eIF2 is a heterotrimeric complex composed of an alpha (EIF2S1), a beta (EIF2S2) and a gamma (EIF2S3) chain. eIF2 is member of the 43S pre-initiation complex (43S PIC). Interacts (via C-terminus) with CDC123; the interaction is direct.

The protein localises to the cytoplasm. The protein resides in the cytosol. Its function is as follows. Member of the eIF2 complex that functions in the early steps of protein synthesis by forming a ternary complex with GTP and initiator tRNA. This complex binds to a 40S ribosomal subunit, followed by mRNA binding to form the 43S pre-initiation complex (43S PIC). Junction of the 60S ribosomal subunit to form the 80S initiation complex is preceded by hydrolysis of the GTP bound to eIF2 and release of an eIF2-GDP binary complex. In order for eIF2 to recycle and catalyze another round of initiation, the GDP bound to eIF2 must exchange with GTP by way of a reaction catalyzed by eIF-2B. The chain is Eukaryotic translation initiation factor 2 subunit 3 (EIF2S3) from Oryctolagus cuniculus (Rabbit).